The chain runs to 480 residues: Krueppel-like factor 10 (480 aa).

The segment covering 1–12 has biased composition (polar residues); the sequence is MLNFGASLQQAS. Disordered regions lie at residues 1 to 32, 64 to 83, and 97 to 146; these read MLNF…PWDK, VTPV…TPDL, and PSDF…APPL. Residues 14 to 32 show a composition bias toward basic and acidic residues; sequence GKMELISEKSKEGAHPWDK. The residue at position 183 (serine 183) is a Phosphoserine. The interval 202-222 is disordered; sequence AAVSPNRPKPEPSTAANGAEK. Position 249 is a phosphoserine (serine 249). 3 consecutive C2H2-type zinc fingers follow at residues 369 to 393, 399 to 423, and 429 to 451; these read HICS…VRTH, FSCS…RRTH, and FACP…ARRH.

Belongs to the Sp1 C2H2-type zinc-finger protein family. In terms of processing, ubiquitinated; mediated by SIAH1 and leading to its subsequent proteasomal degradation.

It localises to the nucleus. Transcriptional repressor which binds to the consensus sequence 5'-GGTGTG-3'. Regulates the circadian expression of genes involved in lipogenesis, gluconeogenesis, and glycolysis in the liver. Represses the expression of PCK2, a rate-limiting step enzyme of gluconeogenesis. May play a role in the cell cycle regulation. Plays a role in the regulation of the circadian clock; binds to the GC box sequence in the promoter of the core clock component ARTNL/BMAL1 and represses its transcriptional activity. The protein is Krueppel-like factor 10 (Klf10) of Rattus norvegicus (Rat).